The following is a 360-amino-acid chain: S-adenosylmethionine:tRNA ribosyltransferase-isomerase (360 aa).

It belongs to the QueA family. Monomer.

It localises to the cytoplasm. It catalyses the reaction 7-aminomethyl-7-carbaguanosine(34) in tRNA + S-adenosyl-L-methionine = epoxyqueuosine(34) in tRNA + adenine + L-methionine + 2 H(+). The protein operates within tRNA modification; tRNA-queuosine biosynthesis. Its function is as follows. Transfers and isomerizes the ribose moiety from AdoMet to the 7-aminomethyl group of 7-deazaguanine (preQ1-tRNA) to give epoxyqueuosine (oQ-tRNA). The sequence is that of S-adenosylmethionine:tRNA ribosyltransferase-isomerase from Rhizobium rhizogenes (strain K84 / ATCC BAA-868) (Agrobacterium radiobacter).